Here is a 225-residue protein sequence, read N- to C-terminus: Uracil-DNA glycosylase (225 aa).

The Proton acceptor role is filled by Asp65.

The protein belongs to the uracil-DNA glycosylase (UDG) superfamily. UNG family.

Its subcellular location is the cytoplasm. It catalyses the reaction Hydrolyzes single-stranded DNA or mismatched double-stranded DNA and polynucleotides, releasing free uracil.. Functionally, excises uracil residues from the DNA which can arise as a result of misincorporation of dUMP residues by DNA polymerase or due to deamination of cytosine. In Bacillus anthracis (strain A0248), this protein is Uracil-DNA glycosylase.